A 736-amino-acid polypeptide reads, in one-letter code: Catalase-peroxidase 2 (736 aa).

Residues 1–23 form the signal peptide; the sequence is MIKKTLPVLILLALSGSFSTAVA. A cross-link (tryptophyl-tyrosyl-methioninium (Trp-Tyr) (with M-249)) is located at residues 102–223; the sequence is WHGAGTYRTY…LAATQMGLIY (122 aa). Catalysis depends on histidine 103, which acts as the Proton acceptor. The tryptophyl-tyrosyl-methioninium (Tyr-Met) (with W-102) cross-link spans 223–249; it reads YVNPEGPGGKPDPLASAKDIREAFSRM. Histidine 264 serves as a coordination point for heme b.

Belongs to the peroxidase family. Peroxidase/catalase subfamily. In terms of assembly, homodimer or homotetramer. Heme b is required as a cofactor. Post-translationally, formation of the three residue Trp-Tyr-Met cross-link is important for the catalase, but not the peroxidase activity of the enzyme.

Its subcellular location is the periplasm. It catalyses the reaction H2O2 + AH2 = A + 2 H2O. The enzyme catalyses 2 H2O2 = O2 + 2 H2O. In terms of biological role, bifunctional enzyme with both catalase and broad-spectrum peroxidase activity. The protein is Catalase-peroxidase 2 of Escherichia coli O157:H7.